A 516-amino-acid chain; its full sequence is D-aminopeptidase (516 aa).

Ser61 functions as the Nucleophile in the catalytic mechanism. Lys64 functions as the Proton donor/acceptor in the catalytic mechanism. The important for specificity stretch occupies residues 476-486 (RRSMDAPAPGD). Asp480 contributes to the substrate binding site.

The protein belongs to the peptidase S12 family. Homodimer.

The catalysed reaction is Release of an N-terminal D-amino acid from a peptide, Xaa-|-Yaa-, in which Xaa is preferably D-Ala, D-Ser or D-Thr. D-amino acid amides and methyl esters also are hydrolyzed, as is glycine amide.. With respect to regulation, inhibited by beta-lactam compounds such as 6-aminopenicillic acid, 7-aminocephalosporanic acid, benzylpenicillin and ampicillin. Inhibited by p-chloromercuribenzoate. In terms of biological role, hydrolyzes N-terminal residues in D-amino acid-containing peptides. The polypeptide is D-aminopeptidase (Cereibacter sphaeroides (strain KD131 / KCTC 12085) (Rhodobacter sphaeroides)).